Here is a 375-residue protein sequence, read N- to C-terminus: tRNA-specific 2-thiouridylase MnmA (375 aa).

Residues 17-24 (GMSGGVDS) and Met-43 contribute to the ATP site. The interaction with target base in tRNA stretch occupies residues 103 to 105 (NPD). Residue Cys-108 is the Nucleophile of the active site. Cys-108 and Cys-204 form a disulfide bridge. Gly-132 serves as a coordination point for ATP. Residues 154-156 (KDQ) are interaction with tRNA. The active-site Cysteine persulfide intermediate is the Cys-204. The interval 316-317 (RY) is interaction with tRNA.

It belongs to the MnmA/TRMU family.

Its subcellular location is the cytoplasm. It carries out the reaction S-sulfanyl-L-cysteinyl-[protein] + uridine(34) in tRNA + AH2 + ATP = 2-thiouridine(34) in tRNA + L-cysteinyl-[protein] + A + AMP + diphosphate + H(+). In terms of biological role, catalyzes the 2-thiolation of uridine at the wobble position (U34) of tRNA, leading to the formation of s(2)U34. The sequence is that of tRNA-specific 2-thiouridylase MnmA from Stutzerimonas stutzeri (strain A1501) (Pseudomonas stutzeri).